The primary structure comprises 426 residues: Serine--tRNA ligase (426 aa).

231–233 serves as a coordination point for L-serine; that stretch reads TAE. Residues 262–264 and V278 each bind ATP; that span reads RRE. E285 lines the L-serine pocket. Residue 349–352 participates in ATP binding; that stretch reads EVSS. L-serine is bound at residue S384.

This sequence belongs to the class-II aminoacyl-tRNA synthetase family. Type-1 seryl-tRNA synthetase subfamily. Homodimer. The tRNA molecule binds across the dimer.

It is found in the cytoplasm. The enzyme catalyses tRNA(Ser) + L-serine + ATP = L-seryl-tRNA(Ser) + AMP + diphosphate + H(+). It catalyses the reaction tRNA(Sec) + L-serine + ATP = L-seryl-tRNA(Sec) + AMP + diphosphate + H(+). Its pathway is aminoacyl-tRNA biosynthesis; selenocysteinyl-tRNA(Sec) biosynthesis; L-seryl-tRNA(Sec) from L-serine and tRNA(Sec): step 1/1. In terms of biological role, catalyzes the attachment of serine to tRNA(Ser). Is also able to aminoacylate tRNA(Sec) with serine, to form the misacylated tRNA L-seryl-tRNA(Sec), which will be further converted into selenocysteinyl-tRNA(Sec). This chain is Serine--tRNA ligase, found in Chlamydia caviae (strain ATCC VR-813 / DSM 19441 / 03DC25 / GPIC) (Chlamydophila caviae).